A 2329-amino-acid polypeptide reads, in one-letter code: Pre-mRNA-splicing factor 8 homolog (2329 aa).

Residues 1–53 are disordered; that stretch reads MANYGGHPQTEPHAIPDSILEEKSRKWKQLQGKRYSEKKKFGMSDTQKEEMPP. The span at 34–53 shows a compositional bias: basic and acidic residues; the sequence is RYSEKKKFGMSDTQKEEMPP. The segment at 804 to 1295 is reverse transcriptase homology domain; that stretch reads TTVHWLESRR…KIQTRIKIGL (492 aa). Positions 1296 to 1570 are linker; sequence NSKMPSRFPP…TLKISLIQIF (275 aa). The segment at 1506-1519 is important for branch point selection; sequence MKFKKLTNAQRSGL. Residues 1574–1745 form a restriction endonuclease homology domain region; the sequence is LWQKIHESVV…LRERIRKGLQ (172 aa). An RNase H homology domain region spans residues 1760 to 2013; sequence NYGELFSNQI…ILGMEISAPS (254 aa). One can recognise an MPN domain in the interval 2096-2227; that stretch reads TYILPKNILK…LTAYKLTPSG (132 aa).

Part of the U5 snRNP complex and of the U4/U6-U5 tri-snRNP complex.

The protein resides in the nucleus. Functionally, functions as a scaffold that mediates the ordered assembly of spliceosomal proteins and snRNAs. Required for the assembly of the U4/U6-U5 tri-snRNP complex. Functions as a scaffold that positions spliceosomal U2, U5 and U6 snRNAs at splice sites on pre-mRNA substrates, so that splicing can occur. Interacts with both the 5' and the 3' splice site. This Caenorhabditis elegans protein is Pre-mRNA-splicing factor 8 homolog (prp-8).